The sequence spans 568 residues: Proline--tRNA ligase (568 aa).

Belongs to the class-II aminoacyl-tRNA synthetase family. ProS type 1 subfamily. In terms of assembly, homodimer.

It localises to the cytoplasm. The catalysed reaction is tRNA(Pro) + L-proline + ATP = L-prolyl-tRNA(Pro) + AMP + diphosphate. Catalyzes the attachment of proline to tRNA(Pro) in a two-step reaction: proline is first activated by ATP to form Pro-AMP and then transferred to the acceptor end of tRNA(Pro). As ProRS can inadvertently accommodate and process non-cognate amino acids such as alanine and cysteine, to avoid such errors it has two additional distinct editing activities against alanine. One activity is designated as 'pretransfer' editing and involves the tRNA(Pro)-independent hydrolysis of activated Ala-AMP. The other activity is designated 'posttransfer' editing and involves deacylation of mischarged Ala-tRNA(Pro). The misacylated Cys-tRNA(Pro) is not edited by ProRS. This Halothermothrix orenii (strain H 168 / OCM 544 / DSM 9562) protein is Proline--tRNA ligase.